We begin with the raw amino-acid sequence, 212 residues long: Putative 3-methyladenine DNA glycosylase (212 aa).

This sequence belongs to the DNA glycosylase MPG family.

The protein is Putative 3-methyladenine DNA glycosylase of Frankia casuarinae (strain DSM 45818 / CECT 9043 / HFP020203 / CcI3).